A 782-amino-acid chain; its full sequence is E3 ubiquitin-protein ligase SopA (782 aa).

The interval 137 to 171 (VSVSANNRPTVSEGRTPPVSPSLSLQATSSPSSPA) is disordered. The segment covering 157 to 171 (PSLSLQATSSPSSPA) has biased composition (low complexity). Cysteine 753 (glycyl thioester intermediate) is an active-site residue.

It belongs to the SopA E3 ligase family. Ubiquitinated in the presence of host E1 ubiquitin-activating enzyme, E2 ubiquitin-conjugating enzyme and ubiquitin.

It localises to the secreted. It is found in the host cell. The enzyme catalyses S-ubiquitinyl-[E2 ubiquitin-conjugating enzyme]-L-cysteine + [acceptor protein]-L-lysine = [E2 ubiquitin-conjugating enzyme]-L-cysteine + N(6)-ubiquitinyl-[acceptor protein]-L-lysine.. Its function is as follows. Effector proteins function to alter host cell physiology and promote bacterial survival in host tissues. This protein is an E3 ubiquitin ligase that interferes with host's ubiquitination pathway. For instance, prevents host innate immune response by ubiquitinating and thus sending to degradation host E3 ubiquitin ligases TRIM56 and TRIM65. The polypeptide is E3 ubiquitin-protein ligase SopA (sopA) (Salmonella typhimurium (strain 14028s / SGSC 2262)).